A 231-amino-acid chain; its full sequence is Sugar fermentation stimulation protein homolog (231 aa).

Belongs to the SfsA family.

This Geotalea daltonii (strain DSM 22248 / JCM 15807 / FRC-32) (Geobacter daltonii) protein is Sugar fermentation stimulation protein homolog.